A 300-amino-acid polypeptide reads, in one-letter code: Glycerol-3-phosphate dehydrogenase [NAD(P)+] (300 aa).

The NADPH site is built by W11, K33, and K79. Residues K79, G107, and S109 each coordinate sn-glycerol 3-phosphate. An NADPH-binding site is contributed by A111. Sn-glycerol 3-phosphate is bound by residues K161, D214, S224, R225, and N226. Residue K161 is the Proton acceptor of the active site. Residue R225 participates in NADPH binding. NADPH is bound by residues V249 and E251.

Belongs to the NAD-dependent glycerol-3-phosphate dehydrogenase family.

It is found in the cytoplasm. It carries out the reaction sn-glycerol 3-phosphate + NAD(+) = dihydroxyacetone phosphate + NADH + H(+). The enzyme catalyses sn-glycerol 3-phosphate + NADP(+) = dihydroxyacetone phosphate + NADPH + H(+). The protein operates within membrane lipid metabolism; glycerophospholipid metabolism. Catalyzes the reduction of the glycolytic intermediate dihydroxyacetone phosphate (DHAP) to sn-glycerol 3-phosphate (G3P), the key precursor for phospholipid synthesis. This is Glycerol-3-phosphate dehydrogenase [NAD(P)+] from Campylobacter lari (strain RM2100 / D67 / ATCC BAA-1060).